The primary structure comprises 204 residues: Phosphopantothenoylcysteine decarboxylase (204 aa).

FMN contacts are provided by residues T53 and 104–107 (DANT). Position 140 (N140) interacts with substrate. The active-site Proton donor is C173.

The protein belongs to the HFCD (homooligomeric flavin containing Cys decarboxylase) superfamily. In terms of assembly, homotrimer. Requires FMN as cofactor.

The enzyme catalyses N-[(R)-4-phosphopantothenoyl]-L-cysteine + H(+) = (R)-4'-phosphopantetheine + CO2. It functions in the pathway cofactor biosynthesis; coenzyme A biosynthesis; CoA from (R)-pantothenate: step 3/5. Functionally, catalyzes the decarboxylation of the cysteine moiety of 4-phosphopantothenoylcysteine to form 4'-phosphopantotheine and this reaction forms part of the biosynthesis of coenzyme A. The protein is Phosphopantothenoylcysteine decarboxylase (Ppcdc) of Mus musculus (Mouse).